We begin with the raw amino-acid sequence, 907 residues long: Gamma-tubulin complex component 3 (907 aa).

Ala2 carries the post-translational modification N-acetylalanine. Residue Ser113 is modified to Phosphoserine. Over residues 210–230 (NQPSSQATTSKGVPSAVSRNM) the composition is skewed to polar residues. Residues 210-241 (NQPSSQATTSKGVPSAVSRNMTRSRREGDTGG) form a disordered region.

This sequence belongs to the TUBGCP family. As to quaternary structure, component of the gamma-tubulin ring complex (gTuRC) consisting of TUBGCP2, TUBGCP3, TUBGCP4, TUBGCP5 and TUBGCP6 and gamma-tubulin TUBG1 or TUBG2. TUBGCP2, TUBGCP3, TUBGCP4, TUBGCP5 and TUBGCP6 assemble in a 5:5:2:1:1 stoichiometry; each is associated with a gamma-tubulin, thereby arranging 14 gamma-tubulins in a helical manner. Gamma-tubulin at the first position is blocked by TUBGCP3 at the last position, allowing 13 protafilaments to grow into a microtubule. The gTuRC (via TUBGCP3 and TUBGCP6) interacts with ACTB and MZT1; the interactions form a luminal bridge that stabilizes the initial structure during complex assembly. The gTuRC (via TUBGCP2) interacts with MZT2A/MZT2B and CDK5RAP2 (via CM1 motif); the interactions play a role in gTuRC activation. Interacts with NIN (via N-terminus); the interaction may promote recruitment of the gamma-tubulin ring complex to the centrosome. Ubiquitously expressed.

Its subcellular location is the cytoplasm. The protein resides in the cytoskeleton. It localises to the microtubule organizing center. It is found in the centrosome. Functionally, component of the gamma-tubulin ring complex (gTuRC) which mediates microtubule nucleation. The gTuRC regulates the minus-end nucleation of alpha-beta tubulin heterodimers that grow into microtubule protafilaments, a critical step in centrosome duplication and spindle formation. This Homo sapiens (Human) protein is Gamma-tubulin complex component 3 (TUBGCP3).